The following is a 100-amino-acid chain: Protein translation factor SUI1 homolog (100 aa).

Belongs to the SUI1 family.

This chain is Protein translation factor SUI1 homolog, found in Thermoplasma volcanium (strain ATCC 51530 / DSM 4299 / JCM 9571 / NBRC 15438 / GSS1).